Reading from the N-terminus, the 1131-residue chain is MSGSHSNDEDDVVQVPETSSPTKVASSSPLKPTSPTVPDASVASLRSRFTFKPSDPSEGAHTSKPLPSGSPEVALVNLAREFPDFSQTLVQAVFKSNSFNLQSARERLTRLRQQRQNWTWNKNASPKKSETPPPVKKSLPLANTGRLSSIHGNINNKSSKITVAKQKTSIFDRYSNVINQKQYTFELPTNLNIDSEALSKLPVNYNKKRRLVRADQHPIGKSYESSATQLGSAREKLLANRKYGRHANDNDEEEEESMMTDDDDASGDDYTESTPQINLDEQVLQFINDSDIVDLSDLSDTTMHKAQLIASHRPYSSLNAFVNTNFNDKDTEENASNKRKRRAAASANESERLLDKITQSIRGYNAIESVIKKCSSYGDLVTSQMKKWGVQVEGDNSELDLMNLGEDDDDDNDDGNNDNNNSNNNNTAGADATSKEKEDTKAVVEGFDETSAEPTPAPAPAPVERETKRIRNTTKPKVVEDEDDDVDLEAIDDELPQSEHEDDDYEEEDEDYNDEEEDVEYDDGDDDDDDDDEFVATRKNTHVISTTSRNGRKPIVKFFKGKPRLLSPEISLKDYQQTGINWLNLLYQNKMSCILADDMGLGKTCQVISFFAYLKQINEPGPHLVVVPSSTLENWLREFQKFAPALKIEPYYGSLQEREELRDILERNAGKYDVIVTTYNLAAGNKYDVSFLKNRNFNVVVYDEGHMLKNSTSERFAKLMKIRANFRLLLTGTPLQNNLKELMSLLEFIMPNLFISKKESFDAIFKQRAKTTDDNKNHNPLLAQEAITRAKTMMKPFILRRRKDQVLKHLPPKHTHIQYCELNAIQKKIYDKEIQIVLEHKRMIKDGELPKDAKEKSKLQSSSSKNLIMALRKASLHPLLFRNIYNDKIITKMSDAILDEPAYAENGNKEYIKEDMSYMTDFELHKLCCNFPNTLSKYQLHNDEWMQSGKIDALKKLLKTIIVDKQEKVLIFSLFTQVLDILEMVLSTLDYKFLRLDGSTQVNDRQLLIDKFYEDKDIPIFILSTKAGGFGINLVCANNVIIFDQSFNPHDDRQAADRAHRVGQTKEVNITTLITKDSIEEKIHQLAKNKLALDSYISEDKKSQDVLESKVSDMLEDIIYDENSKPKGTKE.

The disordered stretch occupies residues 1–70; the sequence is MSGSHSNDED…HTSKPLPSGS (70 aa). Polar residues predominate over residues 16-36; the sequence is PETSSPTKVASSSPLKPTSPT. The interval 76 to 111 is CUE-like region; it reads VNLAREFPDFSQTLVQAVFKSNSFNLQSARERLTRL. The tract at residues 114 to 141 is disordered; sequence QRQNWTWNKNASPKKSETPPPVKKSLPL. Serine 232 carries the phosphoserine modification. 2 disordered regions span residues 242-273 and 327-350; these read KYGRHANDNDEEEEESMMTDDDDASGDDYTES and NDKDTEENASNKRKRRAAASANES. A compositionally biased stretch (acidic residues) spans 250–271; that stretch reads NDEEEEESMMTDDDDASGDDYT. Position 369 is a phosphoserine (serine 369). The disordered stretch occupies residues 400–533; it reads DLMNLGEDDD…GDDDDDDDDE (134 aa). Residues 405-416 are compositionally biased toward acidic residues; that stretch reads GEDDDDDNDDGN. Over residues 417–432 the composition is skewed to low complexity; the sequence is NDNNNSNNNNTAGADA. Over residues 433 to 442 the composition is skewed to basic and acidic residues; sequence TSKEKEDTKA. Serine 451 carries the phosphoserine modification. Positions 480–533 are enriched in acidic residues; it reads EDEDDDVDLEAIDDELPQSEHEDDDYEEEDEDYNDEEEDVEYDDGDDDDDDDDE. One can recognise a Helicase ATP-binding domain in the interval 584–752; sequence NLLYQNKMSC…MSLLEFIMPN (169 aa). Residue 597-604 coordinates ATP; the sequence is DDMGLGKT. Residues 703–706 carry the DEGH box motif; the sequence is DEGH. The region spanning 953–1108 is the Helicase C-terminal domain; that stretch reads ALKKLLKTII…EDKKSQDVLE (156 aa).

This sequence belongs to the SNF2/RAD54 helicase family. As to quaternary structure, homodimer.

The protein resides in the nucleus. The protein localises to the chromosome. The enzyme catalyses ATP + H2O = ADP + phosphate + H(+). Functionally, DNA helicase that possesses intrinsic ATP-dependent nucleosome-remodeling activity and is both required for DNA repair and heterochromatin organization. Promotes DNA end resection of double-strand breaks (DSBs) following DNA damage: probably acts by weakening histone DNA interactions in nucleosomes flanking DSBs, facilitating single-stranded DNA (ssDNA) production by the EXO1 and SGS1 machinery. Promotes gene silencing at heterochromatin by regulating the chromatin structure within or around silent loci. Also required for heterochromatin organization at centromeres. This Saccharomyces cerevisiae (strain ATCC 204508 / S288c) (Baker's yeast) protein is ATP-dependent helicase FUN30 (FUN30).